A 22-amino-acid polypeptide reads, in one-letter code: Myofibril-bound serine protease (22 aa).

It belongs to the peptidase S1 family. In terms of tissue distribution, detected in muscle (at protein level).

It localises to the cytoplasm. Inhibited by the serine protease inhibitors, antipain, aprotinin, DFP, leupeptin, STI and TLCK, and by the cysteine proteinase inhibitors DTNB and to a lesser extent E-64. Not inhibited by the metalloproteinase inhibitor EDTA. Serine protease that selectively cleaves Arg-|-Xaa bonds. The sequence is that of Myofibril-bound serine protease from Cyprinus carpio (Common carp).